The primary structure comprises 219 residues: Lipid transferase CIDEA (219 aa).

One can recognise a CIDE-N domain in the interval 33-110; it reads PARPFRVSNH…ILEKGQKWMP (78 aa). The amphipathic helix stretch occupies residues 163–180; that stretch reads CTGLKGLLRSLLRFLSYS.

It belongs to the CIDE family. As to quaternary structure, homodimer. Interacts with CIDEC. Directly interacts with CEBPB. Interacts with isoform CLSTN3beta of CLSTN3; inhibiting the lipid transferase activity of CIDEA. In terms of tissue distribution, expressed in omental and subcutaneous adipose tissue (at protein level).

It localises to the lipid droplet. The protein resides in the nucleus. The catalysed reaction is a triacyl-sn-glycerol(in) = a triacyl-sn-glycerol(out). Functionally, lipid transferase that promotes unilocular lipid droplet formation by mediating lipid droplet fusion. Lipid droplet fusion promotes their enlargement, restricting lipolysis and favoring lipid storage. Localizes on the lipid droplet surface, at focal contact sites between lipid droplets, and mediates atypical lipid droplet fusion by promoting directional net neutral lipid transfer from the smaller to larger lipid droplets. The transfer direction may be driven by the internal pressure difference between the contacting lipid droplet pair and occurs at a lower rate than that promoted by CIDEC. May also act as a CEBPB coactivator in epithelial cells to control the expression of a subset of CEBPB downstream target genes, including ID2, IGF1, PRLR, SOCS1, SOCS3, XDH, but not casein. By interacting with CEBPB, strengthens the association of CEBPB with the XDH promoter, increases histone acetylation and dissociates HDAC1 from the promoter. When overexpressed, induces apoptosis; the physiological significance of its role in apoptosis is unclear. The protein is Lipid transferase CIDEA of Homo sapiens (Human).